The sequence spans 540 residues: Terminase large subunit (540 aa).

Mn(2+) is bound by residues D352, D424, and D523.

The protein belongs to the skunavirus terminase large subunit family. Interacts with the terminase small subunit; the active complex is probably heterooligomeric. Mn(2+) is required as a cofactor. Mg(2+) serves as cofactor.

Functionally, the terminase large subunit acts as an ATP driven molecular motor necessary for viral DNA translocation into empty capsids and as an endonuclease that cuts the viral genome to initiate and to end a packaging reaction. The terminase lies at a unique vertex of the procapsid and is composed of two subunits, a small terminase subunit involved in viral DNA recognition (packaging sequence), and a large terminase subunit possessing endonucleolytic and ATPase activities. Both terminase subunits heterooligomerize and are docked on the portal protein to form the packaging machine. The terminase large subunit exhibits endonuclease activity and cleaves the viral genome concatemer. This chain is Terminase large subunit, found in Lactococcus lactis (Lactococcus lactis bacteriophage SK1).